The primary structure comprises 77 residues: U8-lycotoxin-Ls1m (77 aa).

The first 20 residues, 1–20, serve as a signal peptide directing secretion; that stretch reads MKLMIFTGLVLFAIVSLIEA. Residues 21 to 26 constitute a propeptide that is removed on maturation; the sequence is QAENEK.

It belongs to the neurotoxin 19 (CSTX) family. 08 (U8-Lctx) subfamily. In terms of processing, contains 4 disulfide bonds. As to expression, expressed by the venom gland.

The protein resides in the secreted. This is U8-lycotoxin-Ls1m from Lycosa singoriensis (Wolf spider).